Here is a 393-residue protein sequence, read N- to C-terminus: Fructose-bisphosphate aldolase 4, cytosolic (393 aa).

Substrate is bound at residue Arg-73. Cys-207 bears the S-glutathionyl cysteine; transient; alternate mark. Cys-207 bears the S-nitrosocysteine; transient; alternate mark. Glu-217 serves as the catalytic Proton acceptor. The active-site Schiff-base intermediate with dihydroxyacetone-P is Lys-259. Residues Ser-301–Gly-303 and Arg-333 each bind substrate.

Belongs to the class I fructose-bisphosphate aldolase family. Homotetramer. In terms of processing, S-glutathionylated at Cys-207. Post-translationally, S-nitrosylated at Cys-207. In terms of tissue distribution, highly expressed in flowers.

The protein resides in the cytoplasm. The protein localises to the cytosol. It carries out the reaction beta-D-fructose 1,6-bisphosphate = D-glyceraldehyde 3-phosphate + dihydroxyacetone phosphate. It participates in carbohydrate degradation; glycolysis; D-glyceraldehyde 3-phosphate and glycerone phosphate from D-glucose: step 4/4. In terms of biological role, fructose-bisphosphate aldolase that plays a key role in glycolysis and gluconeogenesis. This Arabidopsis thaliana (Mouse-ear cress) protein is Fructose-bisphosphate aldolase 4, cytosolic.